Consider the following 502-residue polypeptide: Regulatory protein E2 (502 aa).

The transactivation domain stretch occupies residues Met1–Ser201. The disordered stretch occupies residues Phe195 to Gly388. A compositionally biased stretch (polar residues) spans Ala211 to Thr242. 2 stretches are compositionally biased toward basic residues: residues Lys243–Arg290 and Ser298–Ser311. The segment covering Ala312 to Ser344 has biased composition (low complexity). The segment covering Gly357–Arg367 has biased composition (basic residues). The tract at residues Asp418 to Leu502 is DNA-binding domain.

The protein belongs to the papillomaviridae E2 protein family. As to quaternary structure, binds DNA as homodimer. Interacts with protein E1; this interaction greatly increases E1 DNA-binding activity. Interacts with protein L1; this interaction enhances E2-dependent replication and transcription activation. Interacts with protein L2; this interaction inhibits E2 transcriptional activity but not DNA replication function E2. Interacts with protein E7; this interaction inhibits E7 oncogenic activity. Interacts with host TAF1; this interaction modulates E2-dependent transcriptional regulation. Interacts with host BRD4; this interaction mediates E2 transcriptional activation function. Additionally, the interaction with host BRD4 on mitotic chromosomes mediates tethering of the viral genome. Interacts with host TOPBP1; this interaction is required for optimal viral DNA replication. Phosphorylated.

It is found in the host nucleus. Functionally, plays a role in the initiation of viral DNA replication. A dimer of E2 interacts with a dimer of E1 in order to improve specificity of E1 DNA binding activity. Once the complex recognizes and binds DNA at specific sites, the E2 dimer is removed from DNA. E2 also regulates viral transcription through binding to the E2RE response element (5'-ACCNNNNNNGGT-3') present in multiple copies in the regulatory regions of the viral genome. Activates or represses transcription depending on E2RE's position with regards to proximal promoter elements including the TATA-box. Repression occurs by sterically hindering the assembly of the transcription initiation complex. This chain is Regulatory protein E2, found in Human papillomavirus 25.